The chain runs to 114 residues: Putative ANKRD40 C-terminal-like protein (114 aa).

This chain is Putative ANKRD40 C-terminal-like protein, found in Homo sapiens (Human).